The following is a 153-amino-acid chain: MRVYEGNLISEGKKYGIVVGRFNEFIGSKLLSGALDALKRHGVKEDEIEISWVPGAFEIPLVAKKMAKTKKYDSVICLGAVIKGSTAHFDYVSSEVSKGIANVSLDTEVPVIFGVLTTDNIEQAIERAGTKAGNKGYEAAVTAIEMANLLSEI.

5-amino-6-(D-ribitylamino)uracil contacts are provided by residues phenylalanine 22, 56–58 (AFE), and 80–82 (AVI). 85 to 86 (ST) contacts (2S)-2-hydroxy-3-oxobutyl phosphate. Histidine 88 serves as the catalytic Proton donor. Phenylalanine 113 contributes to the 5-amino-6-(D-ribitylamino)uracil binding site. A (2S)-2-hydroxy-3-oxobutyl phosphate-binding site is contributed by arginine 127.

This sequence belongs to the DMRL synthase family.

The catalysed reaction is (2S)-2-hydroxy-3-oxobutyl phosphate + 5-amino-6-(D-ribitylamino)uracil = 6,7-dimethyl-8-(1-D-ribityl)lumazine + phosphate + 2 H2O + H(+). It functions in the pathway cofactor biosynthesis; riboflavin biosynthesis; riboflavin from 2-hydroxy-3-oxobutyl phosphate and 5-amino-6-(D-ribitylamino)uracil: step 1/2. Functionally, catalyzes the formation of 6,7-dimethyl-8-ribityllumazine by condensation of 5-amino-6-(D-ribitylamino)uracil with 3,4-dihydroxy-2-butanone 4-phosphate. This is the penultimate step in the biosynthesis of riboflavin. In Clostridium novyi (strain NT), this protein is 6,7-dimethyl-8-ribityllumazine synthase.